The chain runs to 386 residues: Leupaxin (386 aa).

The residue at position 1 (M1) is an N-acetylmethionine. The short motif at E3–T15 is the LD motif 1 element. Positions R13–D41 are disordered. S19 carries the phosphoserine modification. Position 22 is a phosphotyrosine (Y22). S54 is subject to Phosphoserine. The residue at position 62 (Y62) is a Phosphotyrosine. 2 short sequence motifs (LD motif) span residues N70–P82 and Q92–M103. Y72 is subject to Phosphotyrosine; by LYN. Phosphoserine is present on S81. LIM zinc-binding domains follow at residues G150–S208, P209–S267, P268–G326, and T327–L386.

This sequence belongs to the paxillin family. Interacts with PTPN22. Interacts with unphosphorylated ITGA4. Interacts with PTK2B/PYK2, PTPN12, AR and SRF. Interacts (via LD motif 3) with LYN and the interaction is induced upon B-cell antigen receptor (BCR) activation. Interacts (via LD motif 3) with PTK2/FAK. In terms of processing, phosphorylated on tyrosine residues. Phosphorylation on Tyr-72 is important for its inhibitory function. Bombesin stimulates phosphorylation on Tyr-22, Tyr-62 and Tyr-72. Macrophages, monocytes and osteoclasts (at protein level). Strongly expressed in cells and tissues of hematopoietic origin. Highest expression in lymphoid tissues such as spleen, lymph node, thymus and appendix and in the vascular smooth muscle. Lower levels in bone marrow and fetal liver. Also expressed in peripheral blood lymphocytes and a number of hematopoietic cell lines. Very low levels found in epithelial cell lines. Expressed in prostate cancer (PCa) cells and its expression intensity is directly linked to PCa progression.

Its subcellular location is the cytoplasm. It localises to the cell junction. It is found in the focal adhesion. The protein resides in the nucleus. The protein localises to the perinuclear region. Its subcellular location is the cell projection. It localises to the podosome. It is found in the cell membrane. Transcriptional coactivator for androgen receptor (AR) and serum response factor (SRF). Contributes to the regulation of cell adhesion, spreading and cell migration and acts as a negative regulator in integrin-mediated cell adhesion events. Suppresses the integrin-induced tyrosine phosphorylation of paxillin (PXN). May play a critical role as an adapter protein in the formation of the adhesion zone in osteoclasts. Negatively regulates B-cell antigen receptor (BCR) signaling. The protein is Leupaxin (LPXN) of Homo sapiens (Human).